The chain runs to 164 residues: Envelope glycoprotein L (164 aa).

The N-terminal stretch at 1-24 (MRSLDRYAIFILLACGLLWRPCLS) is a signal peptide.

The protein belongs to the herpesviridae glycoprotein L family. As to quaternary structure, interacts with glycoprotein H (gH); this interaction is necessary for the correct processing and cell surface expression of gH. The heterodimer gH/gL seems to interact with gB trimers during fusion.

The protein resides in the virion membrane. Its subcellular location is the host cell membrane. It localises to the host Golgi apparatus. It is found in the host trans-Golgi network. The heterodimer glycoprotein H-glycoprotein L is required for the fusion of viral and plasma membranes leading to virus entry into the host cell. Acts as a functional inhibitor of gH and maintains gH in an inhibited form. Upon binding to host integrins, gL dissociates from gH leading to activation of the viral fusion glycoproteins gB and gH. The protein is Envelope glycoprotein L of Equine herpesvirus 2 (strain 86/87) (EHV-2).